The sequence spans 548 residues: Natural resistance-associated macrophage protein 1 (548 aa).

Residues 1–38 (MSGDTGPPKQGGTRYGSISSPPSPEPQQAPPGGTYLSE) form a disordered region. The Cytoplasmic segment spans residues 1 to 55 (MSGDTGPPKQGGTRYGSISSPPSPEPQQAPPGGTYLSEKIPIPDTESGTFSLRKL). Residues 56–73 (WAFTGPGFLMSIAFLDPG) form a helical membrane-spanning segment. At 74–82 (NIESDLQAG) the chain is on the extracellular side. A helical transmembrane segment spans residues 83–102 (AVAGFKLLWVLLWATVLGLL). Over 103–139 (CQRLAARLGVVTGKDLGEVCHLYYPKVPRILLWLTIE) the chain is Cytoplasmic. Residues 140-160 (LAIVGSDMQEVIGTAIAFSLL) form a helical membrane-spanning segment. The Extracellular portion of the chain corresponds to 161–164 (SAGR). Residues 165 to 184 (IPLWGGVLITIVDAFFFLFL) form a helical membrane-spanning segment. Topologically, residues 185-193 (DNYGLRKLE) are cytoplasmic. The helical transmembrane segment at 194 to 214 (AFFGFLITIMALTFGYEYVVA) threads the bilayer. Over 215-237 (QPAQGALLQGLFLPSCPGCGQPE) the chain is Extracellular. Residues 238–256 (LLQAVGIIGAIIMPHNIYL) traverse the membrane as a helical segment. Over 257–284 (HSSLVKSREVDRSRRADIREANMYFLIE) the chain is Cytoplasmic. A helical membrane pass occupies residues 285-304 (ATIALSVSFLINLFVMAVFG). The Extracellular segment spans residues 305–346 (QAFYKQTNQAAFNICANSSLQDYAPIFPRNNLTVAVDIYQGG). N-linked (GlcNAc...) asparagine glycosylation is found at Asn-321 and Asn-335. A helical membrane pass occupies residues 347 to 366 (VILGCLFGPAALYIWAVGLL). Residues 367 to 397 (AAGQSSTMTGTYAGQFVMEGFLKLRWSRFAR) are Cytoplasmic-facing. A helical membrane pass occupies residues 398 to 415 (VLLTRSCAILPTVLLAVF). Residues 416–426 (RDLRDLSGLND) lie on the Extracellular side of the membrane. The helical transmembrane segment at 427–447 (LLNVLQSLLLPFAVLPILTFT) threads the bilayer. At 448-463 (SMPALMREFANGLVSK) the chain is on the cytoplasmic side. A helical membrane pass occupies residues 464–485 (VITSSIMVLVCAVNLYFVISYV). The Extracellular portion of the chain corresponds to 486–493 (PSLPHPAY). The chain crosses the membrane as a helical span at residues 494-513 (FSLVALLAAAYLGLTTYLVW). Residues 514–548 (TCLITQGATLLAHSSHQRFLYGLPEEDQEKGRTSG) lie on the Cytoplasmic side of the membrane.

This sequence belongs to the NRAMP family.

It localises to the late endosome membrane. The protein localises to the lysosome membrane. It carries out the reaction Zn(2+)(in) + H(+)(out) = Zn(2+)(out) + H(+)(in). It catalyses the reaction Fe(2+)(in) + H(+)(out) = Fe(2+)(out) + H(+)(in). The catalysed reaction is Mn(2+)(in) + H(+)(out) = Mn(2+)(out) + H(+)(in). Functionally, macrophage-specific antiporter that fluxes metal ions in either direction against a proton gradient. Localized to late endosomal lysosomal membranes, delivers bivalent cations from the cytosol into these acidic compartments where they may directly affect antimicrobial activity. Involved in iron metabolism and host natural resistance to infection with intracellular parasites. Pathogen resistance involves sequestration of Fe(2+) and Mn(2+), cofactors of both prokaryotic and eukaryotic catalases and superoxide dismutases, not only to protect the macrophage against its own generation of reactive oxygen species, but to deny the cations to the pathogen for synthesis of its protective enzymes. This chain is Natural resistance-associated macrophage protein 1 (SLC11A1), found in Bison bison (American bison).